Here is a 250-residue protein sequence, read N- to C-terminus: DNA repair protein RecO (250 aa).

It belongs to the RecO family.

Involved in DNA repair and RecF pathway recombination. This chain is DNA repair protein RecO, found in Lactobacillus acidophilus (strain ATCC 700396 / NCK56 / N2 / NCFM).